A 244-amino-acid polypeptide reads, in one-letter code: Methylthioribulose-1-phosphate dehydratase (244 aa).

Cys104 serves as a coordination point for substrate. Residues His122 and His124 each coordinate Zn(2+). Residue Glu148 is the Proton donor/acceptor of the active site. His204 contributes to the Zn(2+) binding site.

Belongs to the aldolase class II family. MtnB subfamily. Zn(2+) is required as a cofactor.

The protein localises to the cytoplasm. It carries out the reaction 5-(methylsulfanyl)-D-ribulose 1-phosphate = 5-methylsulfanyl-2,3-dioxopentyl phosphate + H2O. Its pathway is amino-acid biosynthesis; L-methionine biosynthesis via salvage pathway; L-methionine from S-methyl-5-thio-alpha-D-ribose 1-phosphate: step 2/6. Its function is as follows. Catalyzes the dehydration of methylthioribulose-1-phosphate (MTRu-1-P) into 2,3-diketo-5-methylthiopentyl-1-phosphate (DK-MTP-1-P). In Cryptococcus neoformans var. neoformans serotype D (strain B-3501A) (Filobasidiella neoformans), this protein is Methylthioribulose-1-phosphate dehydratase.